A 1136-amino-acid chain; its full sequence is Solute carrier family 12 member 2 (1136 aa).

2 disordered regions span residues Met1 to Gly73 and Pro91 to His121. At Met1 to Gly208 the chain is on the cytoplasmic side. 5 positions are modified to phosphothreonine: Thr125, Thr129, Thr134, Thr139, and Thr152. A discontinuously helical membrane pass occupies residues Trp209–Val234. Leu219 is a Na(+) binding site. Asn220 and Ile221 together coordinate K(+). Position 222 (Trp222) interacts with Na(+). Positions 223, 224, and 225 each coordinate chloride. Over Gly235 to Gly238 the chain is Extracellular. Residues Ile239 to Ser261 traverse the membrane as a helical segment. Residues Ala262 to Glu285 are Cytoplasmic-facing. A helical transmembrane segment spans residues Phe286–Val314. Residue Phe294 coordinates chloride. Position 305 (Tyr305) interacts with K(+). The Extracellular segment spans residues Glu315–Gln327. Helical transmembrane passes span Thr328–Glu351 and Trp352–Phe376. Residues Ile377–Thr407 are Extracellular-facing. Residues Phe408–Asn427 traverse the membrane as a discontinuously helical segment. K(+) contacts are provided by Pro417, Ala418, and Thr420. Chloride contacts are provided by Pro417 and Ala418. Chloride-binding residues include Gly421 and Ile422. The Cytoplasmic segment spans residues Ile428–Ala438. Residues Ile439–Gly462 form a helical membrane-spanning segment. The Extracellular segment spans residues Ala463–Gly523. Residues Asn475 and Asn481 are each glycosylated (N-linked (GlcNAc...) asparagine). Cys496 and Cys507 form a disulfide bridge. Residues Phe524–Phe551 form a helical membrane-spanning segment. Na(+) is bound by residues Ala535, Ser538, and Ser539. Residues Gln552 to Pro576 lie on the Cytoplasmic side of the membrane. Helical transmembrane passes span Leu577 to Glu595 and Leu596 to Phe619. Chloride is bound by residues Phe607 and Tyr611. The Cytoplasmic portion of the chain corresponds to His620–Tyr636. 2 consecutive transmembrane segments (helical) span residues Asn637–Asn656 and Trp657–Ile672. The Cytoplasmic segment spans residues Tyr673–Ser1136. The interval Ala689 to Leu702 is scissor helix. The segment at Ser875 to Pro921 is disordered. Thr1059 carries the post-translational modification Phosphothreonine.

The protein belongs to the SLC12A transporter family. In terms of assembly, homodimer; adopts a domain-swap conformation at the scissor helices connecting the transmembrane domain and C-terminal domain. In terms of processing, phosphorylated at Thr-125, Thr-129 and Thr-134 by OXSR1/OSR1 and STK39/SPAK downstream of WNK kinases (WNK1, WNK2, WNK3 or WNK4), promoting its activity.

Its subcellular location is the basolateral cell membrane. It carries out the reaction K(+)(out) + 2 chloride(out) + Na(+)(out) = K(+)(in) + 2 chloride(in) + Na(+)(in). Its activity is regulated as follows. Activated following phosphorylation by OXSR1/OSR1 and STK39/SPAK. Inhibited by bumetanide. Functionally, cation-chloride cotransporter which mediates the electroneutral transport of chloride, potassium and/or sodium ions across the membrane. Plays a vital role in the regulation of ionic balance and cell volume. Important for maintenance of endolymph volume in the otic vesicle, probably by regulating ion homeostasis. Also plays a role in normal development of the swim bladder. The polypeptide is Solute carrier family 12 member 2 (Danio rerio (Zebrafish)).